Reading from the N-terminus, the 105-residue chain is Serine protease inhibitor Kazal-type 8 (105 aa).

The N-terminal stretch at 1–21 (MKVIFSVAVLVLASSVWTSLA) is a signal peptide. Intrachain disulfides connect Cys-44-Cys-78, Cys-51-Cys-75, and Cys-64-Cys-96. The Kazal-like domain maps to 44–98 (CIKNIQLCWILSYFKVSEPICGSNQVTYEGECHLCSGILYEDRTVIKVHDGPCEH).

Expressed in epydiymis, in the cauda, corpus and caput.

Its subcellular location is the secreted. Probable serine protease inhibitor. The polypeptide is Serine protease inhibitor Kazal-type 8 (Spink8) (Mus musculus (Mouse)).